We begin with the raw amino-acid sequence, 378 residues long: UPF0754 membrane protein BCA_0919 (378 aa).

2 consecutive transmembrane segments (helical) span residues 1 to 21 (MNIW…GGFT) and 357 to 377 (YLGA…LLFL).

It belongs to the UPF0754 family.

It is found in the cell membrane. In Bacillus cereus (strain 03BB102), this protein is UPF0754 membrane protein BCA_0919.